The primary structure comprises 97 residues: Small ribosomal subunit protein bS20 (97 aa).

It belongs to the bacterial ribosomal protein bS20 family.

Functionally, binds directly to 16S ribosomal RNA. This is Small ribosomal subunit protein bS20 from Prochlorococcus marinus (strain MIT 9312).